The following is a 469-amino-acid chain: Argininosuccinate lyase (469 aa).

It belongs to the lyase 1 family. Argininosuccinate lyase subfamily.

Its subcellular location is the cytoplasm. It carries out the reaction 2-(N(omega)-L-arginino)succinate = fumarate + L-arginine. It functions in the pathway amino-acid biosynthesis; L-arginine biosynthesis; L-arginine from L-ornithine and carbamoyl phosphate: step 3/3. The protein is Argininosuccinate lyase of Paracoccus denitrificans (strain Pd 1222).